Reading from the N-terminus, the 208-residue chain is MAPVSALAKYKLVFLGDQSVGKTSIITRFMYDKFDNTYQATIGIDFLSKTMYLEDRTVRLQLWDTAGQERFRSLIPSYIRDSSVAVIVYDVASRQSFLNTTKWIDEVRTERGSDVIVVLVGNKTDLVDKRQVSIEEAEAKARELNVMFIETSAKAGFNIKALFRKIAAALPGMETLSSTKQEDMVDVNLKSSNANASLAQQQSGGCSC.

GTP is bound at residue 16-23 (GDQSVGKT). The Effector region motif lies at 38–46 (YQATIGIDF). GTP is bound by residues 64–68 (DTAGQ), 122–125 (NKTD), and 152–153 (SA). 2 S-geranylgeranyl cysteine lipidation sites follow: cysteine 206 and cysteine 208. Cysteine 208 is subject to Cysteine methyl ester.

This sequence belongs to the small GTPase superfamily. Rab family. Interacts with the C-terminus of GC5, but not with GC3. Expressed in roots, stems, leaves and flowers.

It localises to the golgi apparatus membrane. Its subcellular location is the cytoplasm. It is found in the cytosol. Functionally, protein transport. Regulator of membrane traffic from the Golgi apparatus towards the endoplasmic reticulum (ER). Binds GTP and GDP and possesses intrinsic GTPase activity. The sequence is that of Ras-related protein RABH1b (RABH1B) from Arabidopsis thaliana (Mouse-ear cress).